Reading from the N-terminus, the 522-residue chain is Lysine--tRNA ligase (522 aa).

Residues proline 44–threonine 52 carry the 'HIGH' region motif. The 'KMSKS' region motif lies at lysine 290–serine 294. Lysine 293 contributes to the ATP binding site.

Belongs to the class-I aminoacyl-tRNA synthetase family.

The protein resides in the cytoplasm. It carries out the reaction tRNA(Lys) + L-lysine + ATP = L-lysyl-tRNA(Lys) + AMP + diphosphate. This Rickettsia peacockii (strain Rustic) protein is Lysine--tRNA ligase.